The chain runs to 213 residues: Ribosomal RNA small subunit methyltransferase G (213 aa).

Residues Gly55, 105-106 (AE), and Arg124 each bind S-adenosyl-L-methionine.

Belongs to the methyltransferase superfamily. RNA methyltransferase RsmG family.

It localises to the cytoplasm. Specifically methylates the N7 position of a guanine in 16S rRNA. This chain is Ribosomal RNA small subunit methyltransferase G, found in Fervidobacterium nodosum (strain ATCC 35602 / DSM 5306 / Rt17-B1).